A 102-amino-acid chain; its full sequence is NADH-quinone oxidoreductase subunit K (102 aa).

3 helical membrane-spanning segments follow: residues 5–25 (LAHYLILGAILFAIGIFGIFL), 31–51 (IILLMSIELVLLAVNMNFVAF), and 62–82 (VFVFFILTVAAAEAAIGLAIL).

The protein belongs to the complex I subunit 4L family. NDH-1 is composed of 14 different subunits. Subunits NuoA, H, J, K, L, M, N constitute the membrane sector of the complex.

Its subcellular location is the cell inner membrane. The catalysed reaction is a quinone + NADH + 5 H(+)(in) = a quinol + NAD(+) + 4 H(+)(out). In terms of biological role, NDH-1 shuttles electrons from NADH, via FMN and iron-sulfur (Fe-S) centers, to quinones in the respiratory chain. The immediate electron acceptor for the enzyme in this species is believed to be ubiquinone. Couples the redox reaction to proton translocation (for every two electrons transferred, four hydrogen ions are translocated across the cytoplasmic membrane), and thus conserves the redox energy in a proton gradient. The chain is NADH-quinone oxidoreductase subunit K from Bordetella parapertussis (strain 12822 / ATCC BAA-587 / NCTC 13253).